We begin with the raw amino-acid sequence, 209 residues long: Uracil phosphoribosyltransferase (209 aa).

5-phospho-alpha-D-ribose 1-diphosphate contacts are provided by residues R79, R104, and D131–S139. Residues I194 and G199–A201 each bind uracil. D200 is a binding site for 5-phospho-alpha-D-ribose 1-diphosphate.

This sequence belongs to the UPRTase family. It depends on Mg(2+) as a cofactor.

The enzyme catalyses UMP + diphosphate = 5-phospho-alpha-D-ribose 1-diphosphate + uracil. The protein operates within pyrimidine metabolism; UMP biosynthesis via salvage pathway; UMP from uracil: step 1/1. Allosterically activated by GTP. Functionally, catalyzes the conversion of uracil and 5-phospho-alpha-D-ribose 1-diphosphate (PRPP) to UMP and diphosphate. The sequence is that of Uracil phosphoribosyltransferase from Bacillus pumilus (strain SAFR-032).